Reading from the N-terminus, the 920-residue chain is MASSRAQRFNPIAFTPWPVTCITTIVYLALLIPILVINLVVPSAPETNPKGVNLTEAWRDLQHLTGGFHPYNSRRNDEVHEWLLSRINSIIRPTVEAGQRSSATDNLPEVFVFDDNRSNLTYSNGGVGKTSIVGVYFESTNIIVYIRGSEDDSENWRERSNGKPKGKGGVLVNAHYDSVSTGYGATDDGIGVVSLLQLLRYFTTPGNNPRKGLVLLFNNGEEDYLNGAHVFSQHPLSNFTHTFLNLEDTEVTRFYGNTKHPFGSVLAADGFKMGLLRSQTDYVVFNGILGLRGLDLAFIAPRSRYHTDQDDTRHTSIDSLWHMLSASIGTTEGLVSYTGMDFDGKSKGQNKVNSGAGSLGVWFDMFGTAFAVFRLHTLFAISVALLVIAPLVIFITSVILSKTDRMYLFSMSKSLEGTGDQVSLRGLRGFSRTPIILVIATTIPICLAYLLEKVNPYIVHSSQFSVWSMMFSAWIFLAWFLACAADFFRPSALHRAYSYTWIFVATWIMLVINTVYANQKGIAAGYFLLFYFAGAFLATWISYLELFALPRKGDFARQTTGRRPSSLSSRLLTSSADELRSNASPSTAEFPGAAGEDTDPTESTSLLRGQRTTFANYRTSGPGGAAEETDEREDINKGGTFEHEQSWSWTLPRWTWVLQLLLLAPIVLILVGQLALFLTASMCQVGSDGVSTFVVYLACAVFTTLLCIPLFPLIHRFTYHIPTFLFLVFIGTLIYNLVAFPFSPANRLKTFFIQEVDLDNGSSTVSLTGIQPYLTEAINSIPSAAGQNITCDKTTPFGMLERCSWSGLSPNVLGQGRERDTEIVPDKWITYNITKTVGKNKARIEISGRNTRACKLKFDRAVANFQVSGSAVDHRMPPTSRQGPGVIPALDEVRLYAPSWIAISKAADGLVEASHSFTIQ.

Topologically, residues 1–20 are cytoplasmic; that stretch reads MASSRAQRFNPIAFTPWPVT. Residues 21–41 form a helical membrane-spanning segment; sequence CITTIVYLALLIPILVINLVV. Residues 42 to 378 lie on the Vacuolar side of the membrane; sequence PSAPETNPKG…AFAVFRLHTL (337 aa). N-linked (GlcNAc...) asparagine glycans are attached at residues Asn-53, Asn-116, and Asn-119. The Zn(2+) site is built by His-175 and Asp-187. Glu-221 (proton acceptor) is an active-site residue. Glu-222 contributes to the Zn(2+) binding site. Asn-238 carries N-linked (GlcNAc...) asparagine glycosylation. Residues Glu-247 and His-306 each contribute to the Zn(2+) site. Residues 379 to 399 traverse the membrane as a helical segment; sequence FAISVALLVIAPLVIFITSVI. Topologically, residues 400-433 are cytoplasmic; the sequence is LSKTDRMYLFSMSKSLEGTGDQVSLRGLRGFSRT. Residues 434–454 form a helical membrane-spanning segment; it reads PIILVIATTIPICLAYLLEKV. Residues 455–463 lie on the Vacuolar side of the membrane; the sequence is NPYIVHSSQ. Residues 464–484 traverse the membrane as a helical segment; the sequence is FSVWSMMFSAWIFLAWFLACA. The Cytoplasmic portion of the chain corresponds to 485 to 495; sequence ADFFRPSALHR. The chain crosses the membrane as a helical span at residues 496–516; sequence AYSYTWIFVATWIMLVINTVY. Topologically, residues 517–520 are vacuolar; that stretch reads ANQK. The chain crosses the membrane as a helical span at residues 521–541; that stretch reads GIAAGYFLLFYFAGAFLATWI. Topologically, residues 542-659 are cytoplasmic; it reads SYLELFALPR…TLPRWTWVLQ (118 aa). The segment at 556 to 605 is disordered; that stretch reads ARQTTGRRPSSLSSRLLTSSADELRSNASPSTAEFPGAAGEDTDPTESTS. Residues 559–575 are compositionally biased toward low complexity; it reads TTGRRPSSLSSRLLTSS. The helical transmembrane segment at 660–680 threads the bilayer; sequence LLLLAPIVLILVGQLALFLTA. At 681–693 the chain is on the vacuolar side; that stretch reads SMCQVGSDGVSTF. Residues 694 to 714 form a helical membrane-spanning segment; sequence VVYLACAVFTTLLCIPLFPLI. Residues 715 to 720 are Cytoplasmic-facing; it reads HRFTYH. A helical transmembrane segment spans residues 721-741; sequence IPTFLFLVFIGTLIYNLVAFP. Over 742 to 920 the chain is Vacuolar; it reads FSPANRLKTF…VEASHSFTIQ (179 aa). N-linked (GlcNAc...) asparagine glycans are attached at residues Asn-760, Asn-788, and Asn-832.

It belongs to the peptidase M28 family. Zn(2+) serves as cofactor.

The protein resides in the vacuole membrane. Functionally, may be involved in vacuolar sorting and osmoregulation. In Ajellomyces capsulatus (strain H143) (Darling's disease fungus), this protein is Vacuolar membrane protease.